The primary structure comprises 254 residues: HTH-type transcriptional repressor DasR (254 aa).

Residues 17 to 87 (RTARVPKYYR…QGKGTFVAKP (71 aa)) enclose the HTH gntR-type domain. Residues 47–66 (ERTLAAEFDTSRTTVRQALQ) constitute a DNA-binding region (H-T-H motif).

The protein resides in the cytoplasm. Binding to the target genes is abolished by GlcN6P, a central molecule in N-acetylglucosamine metabolism. In terms of biological role, global regulator that is part of the nutrient-sensing system. In the absence of glucosamine 6-P (GlcN6P), represses the phosphotransferase system (PTS) specific for the uptake of N-acetylglucosamine (PTSNag), and genes involved in the metabolism of chitin, as well as several genes involved in development, thereby linking carbon availability to morphogenesis. Also regulates the expression of the ABC transporters DasABC and NgcEFG, which are involved in N,N'-diacetylchitobiose ((GlcNAc)2) uptake. Binds to the DNA consensus sequence 5'-ACTGGTCTAGACCACT-3'. This is HTH-type transcriptional repressor DasR (dasR) from Streptomyces coelicolor (strain ATCC BAA-471 / A3(2) / M145).